A 285-amino-acid chain; its full sequence is uncharacterized protein (285 aa).

It belongs to the methyltransferase superfamily.

This is an uncharacterized protein from Mycobacterium tuberculosis (strain CDC 1551 / Oshkosh).